Consider the following 464-residue polypeptide: Glutathione reductase (464 aa).

Residues Ser-17 and Gly-18 each contribute to the FAD site. Ser-17 is a glutathione binding site. Arg-24 contacts glutathione. Positions 37, 45, 46, and 54 each coordinate FAD. Cysteines 46 and 51 form a disulfide. Glutathione is bound at residue Tyr-103. Ala-119 is an FAD binding site. The NADP(+) site is built by Ala-186, Ile-189, Glu-192, Arg-209, Arg-215, and Gly-274. An FAD-binding site is contributed by Asp-315. Glu-321 is a binding site for NADP(+). Position 323 (Thr-323) interacts with FAD. Arg-331 contributes to the glutathione binding site. Val-354 is a binding site for NADP(+). Position 453 (His-453) interacts with FAD. Residue His-453 is the Proton acceptor of the active site.

Belongs to the class-I pyridine nucleotide-disulfide oxidoreductase family. Homodimer. FAD is required as a cofactor.

It localises to the cytoplasm. Its subcellular location is the mitochondrion. It carries out the reaction 2 glutathione + NADP(+) = glutathione disulfide + NADPH + H(+). Its function is as follows. Catalyzes the reduction of glutathione disulfide (GSSG) to reduced glutathione (GSH). Constitutes the major mechanism to maintain a high GSH:GSSG ratio in the cytosol. This Schizosaccharomyces pombe (strain 972 / ATCC 24843) (Fission yeast) protein is Glutathione reductase (pgr1).